A 147-amino-acid chain; its full sequence is LDHNNLTRMPGPLPRSLRELHLDHNQISRVPNNALEGLENLTALYLQHNEIQEVGSSMRGLRSLILLDLSYNHLRKVPDGLPSALEQLYLEHNNVYSVPDSYFRGSPKLLYVRLSHNSLTNNGLASNTFNSSSLLELDLSYNQLQKI.

LRR repeat units lie at residues 1–15 (LDHN…PLPR), 16–37 (SLRE…ALEG), 40–61 (NLTA…MRGL), 63–84 (SLIL…LPSA), 85–105 (LEQL…YFRG), and 108–128 (KLLY…ASNT). The N-linked (GlcNAc...) (keratan sulfate) asparagine glycan is linked to asparagine 5. An N-linked (GlcNAc...) (keratan sulfate) asparagine glycan is attached at asparagine 40. Residue asparagine 130 is glycosylated (N-linked (GlcNAc...) (keratan sulfate) asparagine). Residues 133-147 (SLLELDLSYNQLQKI) form an LRR 7 repeat.

It belongs to the small leucine-rich proteoglycan (SLRP) family. SLRP class II subfamily. Binds to type I and type II collagen. In terms of processing, binds keratan sulfate chains.

The protein localises to the secreted. It is found in the extracellular space. Its subcellular location is the extracellular matrix. Functionally, affects the rate of fibrils formation. May have a primary role in collagen fibrillogenesis. The sequence is that of Fibromodulin (FMOD) from Sus scrofa (Pig).